We begin with the raw amino-acid sequence, 360 residues long: MPPSLPCRCQEAPTPVFGYLYQIVELGVMRLFVEKRVFNEIPDEGILIADLATKTGIEFNLLERLVNFLISSRIFTSSSPGYVHHTPTSKYFTERRAQLWYPHIFDTFLTSAVKWPEYFDINGMQEPQCSSKSPFGFGSGYSDKSVYEIFDLMPKRSSDFNATMALSMGEMPILGMYDFSWIGEYGKRPEVKDRTLFVDVSGGKGQALQAILEAFPSIIPEQCVLEDQEKVIEEAKLATGPLETVKKVPIDLFGEQPVKGALVYYIRRVLNDWSDAEVVQILRSIRDACAPDSKVLISENLLPDEPPLKLAAIDVWMLNFGGKRRNKGNFGALARRAGFELSSIAEDDKTKSAVLELVVA.

Residues 201-202 (SG), Asp227, 251-252 (DL), Arg267, and Arg268 contribute to the S-adenosyl-L-methionine site.

This sequence belongs to the class I-like SAM-binding methyltransferase superfamily. Cation-independent O-methyltransferase family.

It functions in the pathway secondary metabolite biosynthesis. Functionally, methyltransferase; part of the gene cluster that mediates the biosynthesis of varicidin A, an antifungal natural product containing a cis-octahydrodecalin core. The PKS module of pvhA together with the enoylreductase pvhC catalyze the formation of the polyketide unit which is then conjugated to L-isoleucine by the condensation domain of the NRPS module. Activity of the Dieckmann cyclase domain (RED) of pvhA results in release of an acyclic tetramate. The cytochrome P450 monooxygenase pvhE then catalyzes the oxidation of the C21 methyl group to a to carboxylate group. The methyltransferase pvhD then further methylates the pvhE product. The Diels-Alderase pvhB is able to catalyze Diels-Alder cycloaddition using both pvhE and pvhD products as substrates to form the decalin ring, yielding varicidin B and A, respectively. This is Methyltransferase pvhD from Talaromyces variabilis (Penicillium variabile).